A 465-amino-acid polypeptide reads, in one-letter code: Argininosuccinate lyase (465 aa).

This sequence belongs to the lyase 1 family. Argininosuccinate lyase subfamily.

Its subcellular location is the cytoplasm. The enzyme catalyses 2-(N(omega)-L-arginino)succinate = fumarate + L-arginine. It participates in amino-acid biosynthesis; L-arginine biosynthesis; L-arginine from L-ornithine and carbamoyl phosphate: step 3/3. This chain is Argininosuccinate lyase, found in Rhodopseudomonas palustris (strain ATCC BAA-98 / CGA009).